Reading from the N-terminus, the 218-residue chain is Adenylate kinase (218 aa).

Residue glycine 10–threonine 15 coordinates ATP. Positions serine 30–valine 59 are NMP. AMP contacts are provided by residues threonine 31, arginine 36, glutamine 57–valine 59, glycine 85–arginine 88, and glutamine 92. Positions glycine 122 to aspartate 159 are LID. ATP contacts are provided by residues arginine 123 and threonine 132 to tyrosine 133. Residues proline 127–glycine 150 are disordered. AMP-binding residues include arginine 156 and arginine 167. ATP is bound at residue glycine 203.

Belongs to the adenylate kinase family. As to quaternary structure, monomer.

The protein resides in the cytoplasm. It catalyses the reaction AMP + ATP = 2 ADP. It participates in purine metabolism; AMP biosynthesis via salvage pathway; AMP from ADP: step 1/1. In terms of biological role, catalyzes the reversible transfer of the terminal phosphate group between ATP and AMP. Plays an important role in cellular energy homeostasis and in adenine nucleotide metabolism. This is Adenylate kinase from Acidovorax ebreus (strain TPSY) (Diaphorobacter sp. (strain TPSY)).